A 337-amino-acid polypeptide reads, in one-letter code: Tetraacyldisaccharide 4'-kinase (337 aa).

51–58 contacts ATP; sequence HVGGAGKT.

It belongs to the LpxK family.

The enzyme catalyses a lipid A disaccharide + ATP = a lipid IVA + ADP + H(+). Its pathway is glycolipid biosynthesis; lipid IV(A) biosynthesis; lipid IV(A) from (3R)-3-hydroxytetradecanoyl-[acyl-carrier-protein] and UDP-N-acetyl-alpha-D-glucosamine: step 6/6. Its function is as follows. Transfers the gamma-phosphate of ATP to the 4'-position of a tetraacyldisaccharide 1-phosphate intermediate (termed DS-1-P) to form tetraacyldisaccharide 1,4'-bis-phosphate (lipid IVA). This Afipia carboxidovorans (strain ATCC 49405 / DSM 1227 / KCTC 32145 / OM5) (Oligotropha carboxidovorans) protein is Tetraacyldisaccharide 4'-kinase.